Here is a 506-residue protein sequence, read N- to C-terminus: Photosystem II CP47 reaction center protein (506 aa).

6 helical membrane passes run 21-36, 101-115, 140-156, 203-218, 237-252, and 457-472; these read SVHI…WAGS, ILFS…IWHW, GIHL…FGAF, IAAG…FHLS, VLSS…AFVV, and SFAL…HGAR.

The protein belongs to the PsbB/PsbC family. PsbB subfamily. PSII is composed of 1 copy each of membrane proteins PsbA, PsbB, PsbC, PsbD, PsbE, PsbF, PsbH, PsbI, PsbJ, PsbK, PsbL, PsbM, PsbT, PsbX, PsbY, PsbZ, Psb30/Ycf12, at least 3 peripheral proteins of the oxygen-evolving complex and a large number of cofactors. It forms dimeric complexes. It depends on Binds multiple chlorophylls. PSII binds additional chlorophylls, carotenoids and specific lipids. as a cofactor.

The protein resides in the plastid. Its subcellular location is the chloroplast thylakoid membrane. One of the components of the core complex of photosystem II (PSII). It binds chlorophyll and helps catalyze the primary light-induced photochemical processes of PSII. PSII is a light-driven water:plastoquinone oxidoreductase, using light energy to abstract electrons from H(2)O, generating O(2) and a proton gradient subsequently used for ATP formation. The polypeptide is Photosystem II CP47 reaction center protein (Cucumis sativus (Cucumber)).